Reading from the N-terminus, the 154-residue chain is Ribonuclease 1 (154 aa).

The protein belongs to the BetVI family.

It localises to the cytoplasm. Functionally, catalyzes the two-stage endonucleolytic cleavage to 3'-phosphomononucleotides and 3'-phosphooligonucleotides with 2',3'-cyclic phosphate intermediates. This is Ribonuclease 1 from Panax ginseng (Korean ginseng).